The following is a 398-amino-acid chain: Phosphoglycerate kinase (398 aa).

Substrate is bound by residues 22–24 (DFN), R38, 61–64 (HLGR), R120, and R153. ATP-binding positions include K206, G297, E328, and 354–357 (GGDT).

This sequence belongs to the phosphoglycerate kinase family. In terms of assembly, monomer.

It is found in the cytoplasm. The catalysed reaction is (2R)-3-phosphoglycerate + ATP = (2R)-3-phospho-glyceroyl phosphate + ADP. It functions in the pathway carbohydrate degradation; glycolysis; pyruvate from D-glyceraldehyde 3-phosphate: step 2/5. The polypeptide is Phosphoglycerate kinase (Nautilia profundicola (strain ATCC BAA-1463 / DSM 18972 / AmH)).